A 158-amino-acid chain; its full sequence is 3-hydroxyacyl-[acyl-carrier-protein] dehydratase FabZ (158 aa).

The active site involves His-57.

It belongs to the thioester dehydratase family. FabZ subfamily.

It is found in the cytoplasm. It carries out the reaction a (3R)-hydroxyacyl-[ACP] = a (2E)-enoyl-[ACP] + H2O. Involved in unsaturated fatty acids biosynthesis. Catalyzes the dehydration of short chain beta-hydroxyacyl-ACPs and long chain saturated and unsaturated beta-hydroxyacyl-ACPs. The sequence is that of 3-hydroxyacyl-[acyl-carrier-protein] dehydratase FabZ from Anaeromyxobacter sp. (strain Fw109-5).